The chain runs to 100 residues: Urease subunit gamma (100 aa).

The protein belongs to the urease gamma subunit family. As to quaternary structure, heterotrimer of UreA (gamma), UreB (beta) and UreC (alpha) subunits. Three heterotrimers associate to form the active enzyme.

It localises to the cytoplasm. The catalysed reaction is urea + 2 H2O + H(+) = hydrogencarbonate + 2 NH4(+). It functions in the pathway nitrogen metabolism; urea degradation; CO(2) and NH(3) from urea (urease route): step 1/1. In Synechococcus sp. (strain RCC307), this protein is Urease subunit gamma.